The following is a 37-amino-acid chain: Large ribosomal subunit protein bL36c (37 aa).

This sequence belongs to the bacterial ribosomal protein bL36 family.

Its subcellular location is the plastid. It is found in the chloroplast. The protein is Large ribosomal subunit protein bL36c of Pinus koraiensis (Korean pine).